The following is a 1622-amino-acid chain: Transient receptor potential cation channel subfamily M member 1 (1622 aa).

Disordered stretches follow at residues 1–25 (MGSMRKMSSSFKRGSIKSSTSGSQK), 64–95 (PPLPSGAPSTTGEDTKQADTQSGKWSVSKHTQ), 450–490 (LAPP…EVEE), 618–641 (LGMEDDEPPAKGKKKKKKKKEEEI), and 822–856 (SKENEDGKEKEEENVDANADAGSRKGDEENEHKKQ). Residues 1 to 875 (MGSMRKMSSS…CEFYNAPIVK (875 aa)) are Cytoplasmic-facing. The span at 8 to 25 (SSSFKRGSIKSSTSGSQK) shows a compositional bias: low complexity. Residues 70–95 (APSTTGEDTKQADTQSGKWSVSKHTQ) show a composition bias toward polar residues. A compositionally biased stretch (basic residues) spans 472 to 483 (GRGKGKGKKKGK). Basic and acidic residues-rich tracts occupy residues 823-832 (KENEDGKEKE) and 843-853 (GSRKGDEENEH). Residues 876 to 896 (FWFYTISYLGYLLLFNYVILV) traverse the membrane as a helical segment. Residues 897 to 942 (RMDGWPSPQEWIVISYIVSLALEKIREILMSEPGKLSQKIKVWLQE) lie on the Extracellular side of the membrane. Residues 943–963 (YWNITDLVAISMFMVGAILRL) traverse the membrane as a helical segment. The Cytoplasmic segment spans residues 964-973 (QSQPYMGYGR). A helical membrane pass occupies residues 974–994 (VIYCVDIILWYIRVLDIFGVN). Residues 995–1006 (KYLGPYVMMIGK) lie on the Extracellular side of the membrane. The chain crosses the membrane as a helical span at residues 1007–1027 (MMIDMLYFVVIMLVVLMSFGV). Residues 1028 to 1099 (ARQAILHPEE…CIPGAWLTPA (72 aa)) lie on the Cytoplasmic side of the membrane. Residues 1100–1120 (LMACYLLVANILLVNLLIAVF) traverse the membrane as a helical segment. Asparagine 1121 is a glycosylation site (N-linked (GlcNAc...) asparagine). Over 1121 to 1150 (NNTFFEVKSISNQVWKFQRYQLIMTFHDRP) the chain is Extracellular. Residues 1151-1171 (VLPPPMIILSHIYIIIMRLSG) traverse the membrane as a helical segment. Topologically, residues 1172–1622 (RCRKKREGDQ…QEKRSAETEC (451 aa)) are cytoplasmic. Positions 1224-1252 (DERIRVTSERVENMSMRLEEINERENFMK) form a coiled coil. 3 disordered regions span residues 1354–1383 (EDAKSHLDQPSNLHHTPGPSPPATPGRSRL), 1389–1408 (LSTELRPGSDPGISAGEFDP), and 1567–1622 (CLRS…ETEC). Over residues 1613–1622 (QEKRSAETEC) the composition is skewed to basic and acidic residues.

It belongs to the transient receptor (TC 1.A.4) family. LTrpC subfamily. TRPM1 sub-subfamily. As to quaternary structure, homodimer. Interacts with TRPM3; the interaction results in the formation of a heteromultimeric cation channel complex that are functionally different from the homomeric channels. Interacts with GPR179. Associates with both guanine nucleotide-binding proteins G(o) and beta-gamma G protein dimer; implicated in directly regulating TRPM1 channel open-state. As to expression, expressed in the retina where it localizes on dendritic tips of ON bipolar cells. Specifically, it is expressed in retinal bipolar cells (BPCs) of the ON subtype. Not detected in brain, lung, liver, heart, kidney, spleen or small intestine. Also expressed at high levels in poorly metastatic variants of B16 melanoma and at much reduced levels in highly metastatic variants of B16 melanoma.

The protein resides in the cell membrane. It is found in the endoplasmic reticulum membrane. It localises to the cell projection. The protein localises to the axon. It carries out the reaction Ca(2+)(in) = Ca(2+)(out). It catalyses the reaction Mg(2+)(in) = Mg(2+)(out). The enzyme catalyses Mn(2+)(in) = Mn(2+)(out). The catalysed reaction is Ni(2+)(in) = Ni(2+)(out). Inhibited by extracellular zinc ions. Inhibited by intracellular Mg(2+). Activated by the neuroactive steroid pregnenolone sulfate. Negatively regulated by activation of GRM6 receptors in the ON-bipolar cells. Its function is as follows. Constitutively open nonselective divalent cation-conducting channels which mediate the influx of Ca(2+), Mg(2+), Mn(2+), Ba(2+), and Ni(2+) into the cytoplasm, leading to membrane depolarization. Impermeable to zinc ions. In addition, forms heteromultimeric ion channels with TRPM3 which are permeable for calcium and zinc ions. Plays an essential role for the depolarizing photoresponse of retinal ON bipolar cells. In the dark, tonic release of glutamate activates the G-protein coupled receptor for glutamate (GRM6), its activation induces the release of G(o) and the beta-gamma G protein dimer. Both subunits can interact and inactivate the TRPM1 channel. A light onset, induces decrease in glutamate release and deactivation of GRM6 leading to channel opening and membrane depolarization. May play a role in metastasis suppression. In Mus musculus (Mouse), this protein is Transient receptor potential cation channel subfamily M member 1.